We begin with the raw amino-acid sequence, 883 residues long: MEPVSDETLAPKYDHKAVEEGRYQEWLDEDVFKPSGDKKAKPYSIVIPPPNVTGKLHMGHAWDTTLQDIVIRQKRIEGFDTLWLPGMDHAGIATQAKVEAKLRKEGISRYDLGREKFVQKVWEWKDEFAKTIHGQWAKMGLSLDYSRERFTLDKGLNQAVRRVFVDLYNQGLIYRGEYIVNWDPQARTALSDIEVIHKDDKGAFYHVKYPFADGSGYIEIATTRPETMMGDTAVAVHPGDERYKDMVGTELILPLANRKIPIIEDAYVDPEFGTGAVKITPAHDPNDFQVGNRHDLKRINTMNDDGTMNENAGKYQGMDRFEARKAMVADLDKAGLLLKVEPIVHSVGHSERTGVQVEARLSTQWFVKMKPLAEAAIKAQQEPDKKVTFVPERFEHTYLQWMENIHDWVISRQLWWGHQIPAWYNKQTGETYVGMEAPKDIENWKQDPDVLDTWFSSALWPFSTMGWPNTDAPDYKRYYPTDTLVTGYDIIPFWVARMIFQGLHFTHQRPFQYTLIHGLMRDEQGRKMSKSLGNGIDPMDVIEKYGADALRWFLITGNKPGQDTRFSYKQVEAAWNFINKIWNISRFVMMNLGDLDTPQQPDPSTFDLSDKWLFAQLNETIKQVMDLSARFEFGEMGRTLYNFTWNVLADWYVEMSKEVLYGDDEQAKAAKRVNLAYALDQILRLLHPVMPFVHGKLWLALPHTGKSIVTASYPVANTAFENADATSAMDAIIALIRGVRGIRKEAGAPLKTKVDILVKLTDPALKPIFEQNFDFIDRFVNSKAFTVGTDVAEPKMAGSAVITGATIFVPLNELIDLDEEKAKLTKDAKKLEQEIARIDKKLNNQGFLSKAPEAVVAEQRTKRSDFEDQLTSTKQRLEQLQRA.

A 'HIGH' region motif is present at residues 50–60 (PNVTGKLHMGH). The short motif at 527–531 (KMSKS) is the 'KMSKS' region element. Position 530 (Lys530) interacts with ATP. The stretch at 811-883 (LNELIDLDEE…KQRLEQLQRA (73 aa)) forms a coiled coil. The segment at 859–883 (QRTKRSDFEDQLTSTKQRLEQLQRA) is disordered.

The protein belongs to the class-I aminoacyl-tRNA synthetase family. ValS type 1 subfamily. As to quaternary structure, monomer.

The protein localises to the cytoplasm. The catalysed reaction is tRNA(Val) + L-valine + ATP = L-valyl-tRNA(Val) + AMP + diphosphate. Its function is as follows. Catalyzes the attachment of valine to tRNA(Val). As ValRS can inadvertently accommodate and process structurally similar amino acids such as threonine, to avoid such errors, it has a 'posttransfer' editing activity that hydrolyzes mischarged Thr-tRNA(Val) in a tRNA-dependent manner. The polypeptide is Valine--tRNA ligase (Lacticaseibacillus casei (Lactobacillus casei)).